Here is a 482-residue protein sequence, read N- to C-terminus: FAD-dependent monooxygenase esdpE (482 aa).

An N-terminal signal peptide occupies residues 1 to 21; sequence MGAERLKVIIVGGSIAGLTLA. Residues E35 and R108 each contribute to the FAD site. The N-linked (GlcNAc...) asparagine glycan is linked to N243. The FAD site is built by D308 and A321. A helical membrane pass occupies residues 440 to 460; that stretch reads LFSGSLLLIMSVALLFGVICW.

It belongs to the paxM FAD-dependent monooxygenase family. FAD is required as a cofactor.

It is found in the membrane. The protein operates within secondary metabolite biosynthesis; terpenoid biosynthesis. Its function is as follows. FAD-dependent monooxygenase; part of the cluster that mediates the biosynthesis of shearones, diterpenoid pyrones (DPs) which are structurally diverse meroterpenoids consisting of a diterpene linked by a pyrone, and which may exhibit a range of bioactivities. Within the pathway, esdpE takes part to the biosynthesis of the molecular scaffold by catalyzing the formation of an (S)-epoxide ring at the terminal olefin of the geranylgeranyl group. The molecular scaffold is commonly biosynthesized by a series of enzymes including the non-reducing polyketide synthase (NR-PKS) esdpA that generates an alpha-pyrone; the prenyltransferase esdpC that attaches a geranylgeranyl pyrophosphate (GGPP) produced by the GGPP synthase (GGPPS) esdpD onto the pyrone unit; the FAD-dependent monooxygenase esdpE that converts an olefin on the diterpene unit into an epoxide; and the terpene cyclase esdpB that catalyzes the cyclization reactions to give the molecular backbone shearone A. In the modification steps, esdpF oxidizes the hydroxy group to a ketone at C-3 and esdpG then attaches hydroxy groups at both C-11 and C-12. After that, esdpI hydroxylates at C-20 and esdpH hydroxylates at C-6'. The ether bridge is generated by nucleophilic attack of the hydroxy group at C-20 to the carbonyl carbon at C-3. EsdpH can also functions prior to esdpI. The different combinations of these modification enzymes lead to the production of diverse shearone derivatives, shearone I being the end product of the pathway. The alpha-ketoglutarate-dependent dioxygenase esdpJ seems not to be involved in this pathway. This chain is FAD-dependent monooxygenase esdpE, found in Penicillium shearii (Eupenicillium shearii).